Reading from the N-terminus, the 400-residue chain is Formate-dependent phosphoribosylglycinamide formyltransferase (400 aa).

Residues 21 to 22 (EL) and glutamate 81 contribute to the N(1)-(5-phospho-beta-D-ribosyl)glycinamide site. ATP contacts are provided by residues arginine 114, lysine 155, 160 to 165 (SSGKGQ), 195 to 198 (EGRI), and glutamate 203. Residues 119 to 313 (RLAAEKLGLP…EFELHVRAIL (195 aa)) form the ATP-grasp domain. Residues glutamate 272 and glutamate 284 each coordinate Mg(2+). N(1)-(5-phospho-beta-D-ribosyl)glycinamide-binding positions include aspartate 291, lysine 360, and 367–368 (RR).

The protein belongs to the PurK/PurT family. Homodimer.

The catalysed reaction is N(1)-(5-phospho-beta-D-ribosyl)glycinamide + formate + ATP = N(2)-formyl-N(1)-(5-phospho-beta-D-ribosyl)glycinamide + ADP + phosphate + H(+). Its pathway is purine metabolism; IMP biosynthesis via de novo pathway; N(2)-formyl-N(1)-(5-phospho-D-ribosyl)glycinamide from N(1)-(5-phospho-D-ribosyl)glycinamide (formate route): step 1/1. Its function is as follows. Involved in the de novo purine biosynthesis. Catalyzes the transfer of formate to 5-phospho-ribosyl-glycinamide (GAR), producing 5-phospho-ribosyl-N-formylglycinamide (FGAR). Formate is provided by PurU via hydrolysis of 10-formyl-tetrahydrofolate. This chain is Formate-dependent phosphoribosylglycinamide formyltransferase, found in Methylococcus capsulatus (strain ATCC 33009 / NCIMB 11132 / Bath).